The following is a 306-amino-acid chain: Bacitracin transport ATP-binding protein BcrA (306 aa).

Positions 5–233 (IKTTDLTKMY…NRKYLEFQLS (229 aa)) constitute an ABC transporter domain. Residue 37–44 (GRNGAGKT) coordinates ATP.

The protein belongs to the ABC transporter superfamily.

In terms of biological role, part of the binding-protein-dependent transport system for bacitracin that confer resistance to this antibiotic. Probably responsible for energy coupling to the transport system. This Bacillus licheniformis protein is Bacitracin transport ATP-binding protein BcrA (bcrA).